Here is a 281-residue protein sequence, read N- to C-terminus: Nucleotide-binding protein Noc_2797 (281 aa).

Residue 8–15 (GVSGSGKS) participates in ATP binding. 58–61 (DARN) lines the GTP pocket.

The protein belongs to the RapZ-like family.

In terms of biological role, displays ATPase and GTPase activities. The polypeptide is Nucleotide-binding protein Noc_2797 (Nitrosococcus oceani (strain ATCC 19707 / BCRC 17464 / JCM 30415 / NCIMB 11848 / C-107)).